We begin with the raw amino-acid sequence, 383 residues long: Histidinol-phosphate aminotransferase (383 aa).

K240 bears the N6-(pyridoxal phosphate)lysine mark.

It belongs to the class-II pyridoxal-phosphate-dependent aminotransferase family. Histidinol-phosphate aminotransferase subfamily. As to quaternary structure, homodimer. Pyridoxal 5'-phosphate serves as cofactor.

The catalysed reaction is L-histidinol phosphate + 2-oxoglutarate = 3-(imidazol-4-yl)-2-oxopropyl phosphate + L-glutamate. The protein operates within amino-acid biosynthesis; L-histidine biosynthesis; L-histidine from 5-phospho-alpha-D-ribose 1-diphosphate: step 7/9. This is Histidinol-phosphate aminotransferase from Oleidesulfovibrio alaskensis (strain ATCC BAA-1058 / DSM 17464 / G20) (Desulfovibrio alaskensis).